The chain runs to 75 residues: UPF0235 protein Ava_3894 (75 aa).

The interval 1 to 32 (MQKKVKVKPNSKQQKIAEQDDGSLTVHLKSPP) is disordered.

It belongs to the UPF0235 family.

The polypeptide is UPF0235 protein Ava_3894 (Trichormus variabilis (strain ATCC 29413 / PCC 7937) (Anabaena variabilis)).